The primary structure comprises 724 residues: Catalase-peroxidase (724 aa).

A cross-link (tryptophyl-tyrosyl-methioninium (Trp-Tyr) (with M-252)) is located at residues 98-226; the sequence is WHSAGTYRIA…LATVMMGLIY (129 aa). Histidine 99 (proton acceptor) is an active-site residue. A cross-link (tryptophyl-tyrosyl-methioninium (Tyr-Met) (with W-98)) is located at residues 226 to 252; the sequence is YVNPEGVDGNPDPLKTAQDMRVTFARM. Histidine 267 lines the heme b pocket.

The protein belongs to the peroxidase family. Peroxidase/catalase subfamily. In terms of assembly, homodimer or homotetramer. Heme b is required as a cofactor. Post-translationally, formation of the three residue Trp-Tyr-Met cross-link is important for the catalase, but not the peroxidase activity of the enzyme.

It carries out the reaction H2O2 + AH2 = A + 2 H2O. The enzyme catalyses 2 H2O2 = O2 + 2 H2O. Its function is as follows. Bifunctional enzyme with both catalase and broad-spectrum peroxidase activity. The polypeptide is Catalase-peroxidase (Vibrio cholerae serotype O1 (strain ATCC 39541 / Classical Ogawa 395 / O395)).